The primary structure comprises 289 residues: Thioredoxin-like protein 1 (289 aa).

Residues 2-109 enclose the Thioredoxin domain; sequence VGVKPVGSDP…EEKIKQHLEN (108 aa). C34 and C37 are oxidised to a cystine. At S113 the chain carries Phosphoserine. The 171-residue stretch at 115 to 285 folds into the PITH domain; the sequence is EDTDIPKGYM…NDFKRVVGKK (171 aa).

In terms of assembly, component of the 19S regulatory cap of the 26S proteasome. Interacts with PSMD14/RPN11. Interacts with, and reduces EEF1A1.

The protein localises to the cytoplasm. Its subcellular location is the nucleus. In terms of biological role, active thioredoxin with a redox potential of about -250 mV. The polypeptide is Thioredoxin-like protein 1 (Txnl1) (Rattus norvegicus (Rat)).